The primary structure comprises 136 residues: uncharacterized protein (136 aa).

This is an uncharacterized protein from Bacillus subtilis (strain 168).